The primary structure comprises 723 residues: Polyribonucleotide nucleotidyltransferase (723 aa).

Mg(2+) contacts are provided by aspartate 497 and aspartate 503. Positions 564–623 (PRLLSFRIDPELIGTVIGPGGRTIKGITERTNTKIDIEDGGIVTIASHDGAAAEAAQRII) constitute a KH domain. The S1 motif domain occupies 633-701 (GEVFTGTITR…NRGRINLTLR (69 aa)). A disordered region spans residues 701–723 (RGVPQNGEETQSEPAPTPVAPLN).

Belongs to the polyribonucleotide nucleotidyltransferase family. Mg(2+) serves as cofactor.

Its subcellular location is the cytoplasm. It catalyses the reaction RNA(n+1) + phosphate = RNA(n) + a ribonucleoside 5'-diphosphate. Involved in mRNA degradation. Catalyzes the phosphorolysis of single-stranded polyribonucleotides processively in the 3'- to 5'-direction. This Prochlorococcus marinus (strain MIT 9313) protein is Polyribonucleotide nucleotidyltransferase.